We begin with the raw amino-acid sequence, 280 residues long: Protease HtpX (280 aa).

The next 2 membrane-spanning stretches (helical) occupy residues 7-26 (TFILLASLTALLVVIGGLLG) and 30-49 (GMLVALLFAGIMNFSAYWYS). His-129 serves as a coordination point for Zn(2+). Glu-130 is a catalytic residue. His-133 serves as a coordination point for Zn(2+). 2 consecutive transmembrane segments (helical) span residues 146–166 (ATIAGAISGIANMFMWLSMFG) and 178–198 (VVGMIMMIVAPLAAGLIQMAI). Position 203 (Glu-203) interacts with Zn(2+).

It belongs to the peptidase M48B family. It depends on Zn(2+) as a cofactor.

The protein resides in the cell inner membrane. The polypeptide is Protease HtpX (Legionella pneumophila (strain Corby)).